We begin with the raw amino-acid sequence, 806 residues long: Disintegrin and metalloproteinase domain-containing protein 1b (806 aa).

An N-terminal signal peptide occupies residues 1–33 (MERLKLGKIPEHWCIRLVAMLLLAIIFLPSTFC). Positions 169-188 (CSVTPKDSPGDTSHPPRSRK) are disordered. Residues 203–397 (KYVEMFVVVN…HRGVCLLDEP (195 aa)) form the Peptidase M12B domain. N224 carries an N-linked (GlcNAc...) asparagine glycan. Disulfide bonds link C313–C392, C353–C376, C355–C361, C462–C482, C635–C647, C641–C653, and C655–C664. H338 contacts Zn(2+). Residue E339 is part of the active site. The Zn(2+) site is built by H342 and H348. N375 and N476 each carry an N-linked (GlcNAc...) asparagine glycan. The Disintegrin domain maps to 406-490 (AANCGNGVVE…ACPSDRKAQD (85 aa)). The EGF-like domain maps to 631–665 (FSFPCSPSKQCNKHGVCNDLGNCHCSFGFAPPDCK). The disordered stretch occupies residues 668–694 (GTGGSVDSGPAVNLSNDSSPGPNSTQS). N-linked (GlcNAc...) asparagine glycans are attached at residues N680, N683, and N690. Residues 680–694 (NLSNDSSPGPNSTQS) are compositionally biased toward polar residues. The helical transmembrane segment at 705 to 725 (LIVLAVILVLMILLIIICIIS) threads the bilayer. At 726–806 (AYTKSETASE…KDEDEEEGEE (81 aa)) the chain is on the cytoplasmic side. A disordered region spans residues 735-806 (EAGPSELEEL…KDEDEEEGEE (72 aa)). Acidic residues predominate over residues 740-806 (ELEELPEGEK…KDEDEEEGEE (67 aa)).

Heterodimer with ADAM2/fertilin subunit beta. In terms of tissue distribution, testis.

It is found in the membrane. May play a role in spermatogenesis and sperm maturation. The chain is Disintegrin and metalloproteinase domain-containing protein 1b (Adam1b) from Mus musculus (Mouse).